We begin with the raw amino-acid sequence, 2841 residues long: Neurofibromin (2841 aa).

N-acetylalanine is present on Ala2. 2 positions are modified to phosphoserine: Ser866 and Ser878. Residues 1253-1484 form the Ras-GAP domain; it reads HLLYQLLWNM…DLARRFFLDI (232 aa). Positions 1582 to 1740 constitute a CRAL-TRIO domain; it reads EKEEFKALKT…ATLALEEDLK (159 aa). The tract at residues 1582–1839 is lipid binding; the sequence is EKEEFKALKT…RTRWELSQPD (258 aa). Residues Ser2190 and Ser2469 each carry the phosphoserine modification. Thr2516 is modified (phosphothreonine). Phosphoserine is present on residues Ser2517, Ser2523, Ser2525, and Ser2545. Residues 2557-2573 carry the Bipartite nuclear localization signal motif; that stretch reads KRQEMESGITTPPKMRR. Thr2567 carries the post-translational modification Phosphothreonine. A phosphoserine mark is found at Ser2599, Ser2804, and Ser2819. The tract at residues 2786-2841 is disordered; sequence SLATSQHSPGLDKENVELSPTAGHCNSGRTRHGSASQVQKQRSAGSFKRNSIKKIV. Positions 2818-2829 are enriched in polar residues; the sequence is GSASQVQKQRSA.

Interacts with HTR6. Interacts with SPRED2. Ubiquitinated by RNF7/RBX2, leading to its degradation. Expressed predominantly in brain, spinal cord and testis. As to expression, expressed predominantly in adrenal gland, kidney, ovary and lung. In terms of tissue distribution, widely and more weakly expressed. Predominantly expressed in adrenal gland. Widely and more weakly expressed. Expressed mainly in testis.

Its subcellular location is the nucleus. The protein resides in the nucleolus. The protein localises to the cell membrane. In terms of biological role, stimulates the GTPase activity of Ras. NF1 shows greater affinity for Ras GAP, but lower specific activity. May be a regulator of Ras activity. The polypeptide is Neurofibromin (Nf1) (Mus musculus (Mouse)).